The sequence spans 246 residues: NAD(P)H-hydrate epimerase (246 aa).

The region spanning 12-234 is the YjeF N-terminal domain; it reads AAEIDKELMG…DFANKFGFEP (223 aa). 69–73 lines the (6S)-NADPHX pocket; it reads NNGGD. K(+) is bound by residues asparagine 70 and aspartate 138. (6S)-NADPHX-binding positions include 142 to 148 and aspartate 173; that span reads GFSFKPP. Residue threonine 176 participates in K(+) binding.

Belongs to the NnrE/AIBP family. K(+) serves as cofactor.

Its subcellular location is the cytoplasm. It localises to the mitochondrion. It catalyses the reaction (6R)-NADHX = (6S)-NADHX. The catalysed reaction is (6R)-NADPHX = (6S)-NADPHX. Functionally, catalyzes the epimerization of the S- and R-forms of NAD(P)HX, a damaged form of NAD(P)H that is a result of enzymatic or heat-dependent hydration. This is a prerequisite for the S-specific NAD(P)H-hydrate dehydratase to allow the repair of both epimers of NAD(P)HX. The protein is NAD(P)H-hydrate epimerase of Saccharomyces cerevisiae (strain ATCC 204508 / S288c) (Baker's yeast).